Consider the following 186-residue polypeptide: Ribosome-recycling factor (186 aa).

Belongs to the RRF family.

It is found in the cytoplasm. Functionally, responsible for the release of ribosomes from messenger RNA at the termination of protein biosynthesis. May increase the efficiency of translation by recycling ribosomes from one round of translation to another. This is Ribosome-recycling factor from Phocaeicola vulgatus (strain ATCC 8482 / DSM 1447 / JCM 5826 / CCUG 4940 / NBRC 14291 / NCTC 11154) (Bacteroides vulgatus).